The primary structure comprises 497 residues: B3 domain-containing protein REM1 (497 aa).

3 DNA-binding regions (TF-B3) span residues 7 to 92 (PSLF…SSES), 142 to 239 (FLRA…LCSH), and 278 to 379 (FLTQ…HSKI). Residues 87 to 135 (AVSSESDDDESDDTDDSESDDESNDTDDSESDDSEDNGEGDSSLVNKEA) are disordered. The segment covering 91–125 (ESDDDESDDTDDSESDDESNDTDDSESDDSEDNGE) has biased composition (acidic residues).

Specifically expressed in the reproductive meristem.

It is found in the nucleus. May play a role in flower development. This is B3 domain-containing protein REM1 (REM1) from Brassica oleracea var. botrytis (Cauliflower).